A 186-amino-acid polypeptide reads, in one-letter code: Tumor necrosis factor alpha-induced protein 8-like protein 1 (186 aa).

Positions Glu37–Leu70 form a coiled coil.

Belongs to the TNFAIP8 family.

The protein localises to the cytoplasm. The polypeptide is Tumor necrosis factor alpha-induced protein 8-like protein 1 (tnfaip8l1) (Danio rerio (Zebrafish)).